Reading from the N-terminus, the 475-residue chain is tRNA-dihydrouridine(16/17) synthase [NAD(P)(+)]-like (475 aa).

FMN is bound by residues 23–25 and glutamine 79; that span reads PMV. Cysteine 108 acts as the Proton donor in catalysis. Residues lysine 147, histidine 175, 208-210, and 232-233 each bind FMN; these read NGN and AE. Residues 343–388 form a disordered region; the sequence is GPREGSKENSGGRSKRALEEEEGSMEGLSKNKLKKQLRNPHKTFDP. Positions 373–383 are enriched in basic residues; sequence NKLKKQLRNPH.

The protein belongs to the Dus family. Dus1 subfamily. FMN is required as a cofactor.

It localises to the cytoplasm. The protein resides in the nucleus. It catalyses the reaction 5,6-dihydrouridine(16) in tRNA + NADP(+) = uridine(16) in tRNA + NADPH + H(+). It carries out the reaction 5,6-dihydrouridine(16) in tRNA + NAD(+) = uridine(16) in tRNA + NADH + H(+). The enzyme catalyses 5,6-dihydrouridine(17) in tRNA + NAD(+) = uridine(17) in tRNA + NADH + H(+). The catalysed reaction is 5,6-dihydrouridine(17) in tRNA + NADP(+) = uridine(17) in tRNA + NADPH + H(+). Its function is as follows. Catalyzes the synthesis of dihydrouridine, a modified base found in the D-loop of most tRNAs. Specifically modifies U16 and U17 in cytoplasmic tRNAs. Affects the level of some mature tRNA and thereby the total cellular translation. The chain is tRNA-dihydrouridine(16/17) synthase [NAD(P)(+)]-like (Dus1l) from Mus musculus (Mouse).